The primary structure comprises 356 residues: Glutamine synthetase cytosolic isozyme 2 (356 aa).

The GS beta-grasp domain occupies 19–99 (IIAEYIWIGG…VMCDTYTPAG (81 aa)). The GS catalytic domain maps to 106-356 (KRHNAAKIFS…IAESTILWKP (251 aa)).

It belongs to the glutamine synthetase family. In terms of assembly, homooctamer.

It is found in the cytoplasm. The catalysed reaction is L-glutamate + NH4(+) + ATP = L-glutamine + ADP + phosphate + H(+). This chain is Glutamine synthetase cytosolic isozyme 2 (GS1-2), found in Vitis vinifera (Grape).